An 872-amino-acid chain; its full sequence is Alanine--tRNA ligase (872 aa).

Zn(2+)-binding residues include His-567, His-571, Cys-669, and His-673.

This sequence belongs to the class-II aminoacyl-tRNA synthetase family. It depends on Zn(2+) as a cofactor.

Its subcellular location is the cytoplasm. The catalysed reaction is tRNA(Ala) + L-alanine + ATP = L-alanyl-tRNA(Ala) + AMP + diphosphate. Its function is as follows. Catalyzes the attachment of alanine to tRNA(Ala) in a two-step reaction: alanine is first activated by ATP to form Ala-AMP and then transferred to the acceptor end of tRNA(Ala). Also edits incorrectly charged Ser-tRNA(Ala) and Gly-tRNA(Ala) via its editing domain. This chain is Alanine--tRNA ligase, found in Streptococcus pyogenes serotype M2 (strain MGAS10270).